We begin with the raw amino-acid sequence, 247 residues long: MKFGKRLKRQIEESLPEWRDHFLNYKELKRRLNAVSSPDPAAEARFLALLHAEVDKFNAFFLEQEEDFVIRQRELQERIQSSSSAAAEMEGRVRREVVDLHGEMVLLLNYSSINYTGLAKILKKYDKRTGGVLRLPVIAGVLRQPFYATDLLSSLVRDCEAIMDAVFPSLPSPSAAAAAAARAAAEQAIFRNTVAALLTMQEVRSGSSTYGHFSLPPMTPLPDSDWLIQSVQPPPPPPPSSPLIIPT.

An SPX domain is found at 1–139 (MKFGKRLKRQ…GGVLRLPVIA (139 aa)). A disordered region spans residues 224-247 (SDWLIQSVQPPPPPPPSSPLIIPT). A compositionally biased stretch (pro residues) spans 232-241 (QPPPPPPPSS).

The protein is SPX domain-containing protein 5 (SPX5) of Oryza sativa subsp. indica (Rice).